A 906-amino-acid chain; its full sequence is Protein translocase subunit SecA (906 aa).

Residues Q87, G105–T109, and D507 contribute to the ATP site. 4 residues coordinate Zn(2+): C890, C892, C901, and H902.

It belongs to the SecA family. In terms of assembly, monomer and homodimer. Part of the essential Sec protein translocation apparatus which comprises SecA, SecYEG and auxiliary proteins SecDF-YajC and YidC. The cofactor is Zn(2+).

The protein resides in the cell inner membrane. It is found in the cytoplasm. The catalysed reaction is ATP + H2O + cellular proteinSide 1 = ADP + phosphate + cellular proteinSide 2.. In terms of biological role, part of the Sec protein translocase complex. Interacts with the SecYEG preprotein conducting channel. Has a central role in coupling the hydrolysis of ATP to the transfer of proteins into and across the cell membrane, serving both as a receptor for the preprotein-SecB complex and as an ATP-driven molecular motor driving the stepwise translocation of polypeptide chains across the membrane. The chain is Protein translocase subunit SecA from Thiobacillus denitrificans (strain ATCC 25259 / T1).